The following is a 1019-amino-acid chain: Photoactivated adenylate cyclase subunit alpha-like protein FB (1019 aa).

Residues 55 to 148 enclose the BLUF 1 domain; that stretch reads LRRLMYLSAS…GRLYGEWHMK (94 aa). The region spanning 204–332 is the Guanylate cyclase 1 domain; sequence VVTFIYLVEF…DCINTASRIT (129 aa). The BLUF 2 domain maps to 467–559; it reads LITLTYISQA…REYGSPLDMT (93 aa). In terms of domain architecture, Guanylate cyclase 2 spans 615-744; sequence VLLATDICSF…EVSARVMEVV (130 aa). The span at 825–839 shows a compositional bias: low complexity; sequence APGRGAPAGGIPSSP. The interval 825 to 862 is disordered; sequence APGRGAPAGGIPSSPKVRPPGRTNSVSSYTPDPNEALD. Positions 846 to 855 are enriched in polar residues; that stretch reads RTNSVSSYTP.

It belongs to the adenylyl cyclase class-4/guanylyl cyclase family. In terms of assembly, heterotetramer of two alpha and two beta subunits.

Its subcellular location is the cell projection. The protein resides in the cilium. It is found in the flagellum. The polypeptide is Photoactivated adenylate cyclase subunit alpha-like protein FB (Euglena gracilis).